Reading from the N-terminus, the 353-residue chain is Thrombopoietin (353 aa).

A signal peptide spans 1 to 21 (MELTELLLVVMLLLTARLTLS). S22 carries O-linked (GalNAc...) serine glycosylation. Cystine bridges form between C28–C172 and C50–C106. O-linked (GalNAc...) threonine glycosylation is found at T58, T131, T179, and T180. Residue S184 is glycosylated (O-linked (GalNAc...) serine). Residues N197 and N206 are each glycosylated (N-linked (GlcNAc...) (complex) asparagine). O-linked (GalNAc...) threonine glycosylation is present at T213. N-linked (GlcNAc...) (complex) asparagine glycosylation is found at N234 and N255. A disordered region spans residues 257 to 353 (TRGLFPGPSR…THSQNLSQEG (97 aa)). An O-linked (GalNAc...) serine glycan is attached at S265. A compositionally biased stretch (polar residues) spans 275–304 (SSGTSDTGSLPPNLQPGYSPSPTHPPTGQY). A compositionally biased stretch (pro residues) spans 324-335 (LPDPSAPTPTPT). Residues N340 and N348 are each glycosylated (N-linked (GlcNAc...) asparagine). Residues 343–353 (YTHSQNLSQEG) are compositionally biased toward polar residues.

The protein belongs to the EPO/TPO family. In terms of assembly, interacts with MPL/TPOR.

It is found in the secreted. In terms of biological role, lineage-specific cytokine affecting the proliferation and maturation of megakaryocytes from their committed progenitor cells. It acts at a late stage of megakaryocyte development. It may be the major physiological regulator of circulating platelets. The chain is Thrombopoietin (THPO) from Homo sapiens (Human).